The following is an 871-amino-acid chain: MVDTKNPGDKTLSVSPTKTLTLKPRVEQGTVRQSFSHGRTKQVVVEKRGKRRIGGDSPGPEPAGTSEPASARTPAAKAPPARAATPAAPRAGSGVVLRKLTEDERSARASALAEAKVRAEEERRIAEAEAARRNSKEGIEQAEREAAEARRKAEEERHRQEEEAKRKAEIEAKRRFGQTESKPAPAKTTTTTTRAAPPARPAAVAADGSDEDEAPRLVRRPGGPARPVIAPKPAAKPAPAKQRGRLTLVTALSADDVRERSIASFRRRTQRLKGHASNEPKEKLVREVVVPEAITIQELANRMAERAVDVIRMLMKQGAMHKITDVIDADTAQLIAEELGHTVKRVAASDVEEGLFDVVDNSTDIEPRSPVVTVMGHVDHGKTSLLDALRHANVVSGEAGGITQHIGAYQVTSPESGKKITFIDTPGHAAFTAMRARGAKVTDLVILVVAADDGVMPQTIEAINHAKAAKVPMIIAINKIDKPEAKPERVRTELLQHEVQVESMGGQVVDVEVSAKNKTNLDKLLEMISLQADLLDLKTNASRPAEGTVIEAKLDRGRGPVATVLVQRGTLRVGDIIVAGAEMGRVRALISDQGETVNEAGPSVPVEVLGFNGPPEAGDRLAVVENEARARQVTSYRAHQKRENAAASTSGMRGSLEQMMSQLKTVGRKDFPLIIKADVQGSLEAILGSLEKLGTDEVAARILHAGVGGISESDVTLAEGFNAAIIGFSVRANKEAAAAAKRNGIEIRYYNIIYDLVDDVKKAMSGLLAPTLRETMLGNAEILEVFNISKVGKVAGCRVTDGSVERGANVRLIRDNVVVHEGKLSTLKRFKDEVKEVQSGQECGMAFESYGDMRVGDVIECYRVETIQRSL.

Residues 1–242 (MVDTKNPGDK…PAAKPAPAKQ (242 aa)) are disordered. The segment covering 68–91 (PASARTPAAKAPPARAATPAAPRA) has biased composition (low complexity). Over residues 115–174 (AKVRAEEERRIAEAEAARRNSKEGIEQAEREAAEARRKAEEERHRQEEEAKRKAEIEAKR) the composition is skewed to basic and acidic residues. Low complexity-rich tracts occupy residues 182–206 (KPAP…AVAA) and 225–241 (ARPV…APAK). Positions 367 to 538 (PRSPVVTVMG…SLQADLLDLK (172 aa)) constitute a tr-type G domain. Residues 376 to 383 (GHVDHGKT) form a G1 region. 376–383 (GHVDHGKT) contacts GTP. The segment at 401–405 (GITQH) is G2. The interval 424 to 427 (DTPG) is G3. GTP is bound by residues 424–428 (DTPGH) and 478–481 (NKID). A G4 region spans residues 478 to 481 (NKID). The segment at 514-516 (SAK) is G5.

This sequence belongs to the TRAFAC class translation factor GTPase superfamily. Classic translation factor GTPase family. IF-2 subfamily.

The protein localises to the cytoplasm. Functionally, one of the essential components for the initiation of protein synthesis. Protects formylmethionyl-tRNA from spontaneous hydrolysis and promotes its binding to the 30S ribosomal subunits. Also involved in the hydrolysis of GTP during the formation of the 70S ribosomal complex. This Nitrobacter winogradskyi (strain ATCC 25391 / DSM 10237 / CIP 104748 / NCIMB 11846 / Nb-255) protein is Translation initiation factor IF-2.